Here is a 108-residue protein sequence, read N- to C-terminus: ATP synthase peripheral stalk subunit F6, mitochondrial (108 aa).

The N-terminal 32 residues, 1–32 (MTVQRIFRLSSVLRSAVSVHLRRNIGVTAVAF), are a transit peptide targeting the mitochondrion. 3 positions are modified to N6-acetyllysine: Lys-41, Lys-46, and Lys-79. Residues Lys-84 and Lys-99 each carry the N6-acetyllysine; alternate modification. An N6-succinyllysine; alternate mark is found at Lys-84 and Lys-99. Lys-105 is modified (N6-acetyllysine). Ser-108 is modified (phosphoserine).

It belongs to the eukaryotic ATPase subunit F6 family. In terms of assembly, component of the ATP synthase complex composed at least of ATP5F1A/subunit alpha, ATP5F1B/subunit beta, ATP5MC1/subunit c (homooctomer), MT-ATP6/subunit a, MT-ATP8/subunit 8, ATP5ME/subunit e, ATP5MF/subunit f, ATP5MG/subunit g, ATP5MK/subunit k, ATP5MJ/subunit j, ATP5F1C/subunit gamma, ATP5F1D/subunit delta, ATP5F1E/subunit epsilon, ATP5PF/subunit F6, ATP5PB/subunit b, ATP5PD/subunit d, ATP5PO/subunit OSCP. ATP synthase complex consists of a soluble F(1) head domain (subunits alpha(3) and beta(3)) - the catalytic core - and a membrane F(0) domain - the membrane proton channel (subunits c, a, 8, e, f, g, k and j). These two domains are linked by a central stalk (subunits gamma, delta, and epsilon) rotating inside the F1 region and a stationary peripheral stalk (subunits F6, b, d, and OSCP).

Its subcellular location is the mitochondrion. It localises to the mitochondrion inner membrane. Its function is as follows. Subunit F6, of the mitochondrial membrane ATP synthase complex (F(1)F(0) ATP synthase or Complex V) that produces ATP from ADP in the presence of a proton gradient across the membrane which is generated by electron transport complexes of the respiratory chain. ATP synthase complex consist of a soluble F(1) head domain - the catalytic core - and a membrane F(1) domain - the membrane proton channel. These two domains are linked by a central stalk rotating inside the F(1) region and a stationary peripheral stalk. During catalysis, ATP synthesis in the catalytic domain of F(1) is coupled via a rotary mechanism of the central stalk subunits to proton translocation. In vivo, can only synthesize ATP although its ATP hydrolase activity can be activated artificially in vitro. Part of the complex F(0) domain. Part of the complex F(0) domain and the peripheric stalk, which acts as a stator to hold the catalytic alpha(3)beta(3) subcomplex and subunit a/ATP6 static relative to the rotary elements. The protein is ATP synthase peripheral stalk subunit F6, mitochondrial of Rattus norvegicus (Rat).